We begin with the raw amino-acid sequence, 118 residues long: Small ribosomal subunit protein uS13 (118 aa).

A disordered region spans residues 94–118 (SLPVHGQRTKTNARTCKGPRKPIKK).

It belongs to the universal ribosomal protein uS13 family. In terms of assembly, part of the 30S ribosomal subunit. Forms a loose heterodimer with protein S19. Forms two bridges to the 50S subunit in the 70S ribosome.

Located at the top of the head of the 30S subunit, it contacts several helices of the 16S rRNA. In the 70S ribosome it contacts the 23S rRNA (bridge B1a) and protein L5 of the 50S subunit (bridge B1b), connecting the 2 subunits; these bridges are implicated in subunit movement. Contacts the tRNAs in the A and P-sites. This Buchnera aphidicola subsp. Acyrthosiphon pisum (strain 5A) protein is Small ribosomal subunit protein uS13.